Here is a 127-residue protein sequence, read N- to C-terminus: Ribonuclease P protein component (127 aa).

Belongs to the RnpA family. In terms of assembly, consists of a catalytic RNA component (M1 or rnpB) and a protein subunit.

The enzyme catalyses Endonucleolytic cleavage of RNA, removing 5'-extranucleotides from tRNA precursor.. Its function is as follows. RNaseP catalyzes the removal of the 5'-leader sequence from pre-tRNA to produce the mature 5'-terminus. It can also cleave other RNA substrates such as 4.5S RNA. The protein component plays an auxiliary but essential role in vivo by binding to the 5'-leader sequence and broadening the substrate specificity of the ribozyme. The sequence is that of Ribonuclease P protein component from Corynebacterium urealyticum (strain ATCC 43042 / DSM 7109).